Consider the following 474-residue polypeptide: tRNA-2-methylthio-N(6)-dimethylallyladenosine synthase (474 aa).

One can recognise an MTTase N-terminal domain in the interval 3–120 (KKLHIKTWGC…LPEMINSVRG (118 aa)). [4Fe-4S] cluster is bound by residues C12, C49, C83, C157, C161, and C164. Residues 143-375 (RAEGPTAFVS…QERINQQAMA (233 aa)) enclose the Radical SAM core domain. One can recognise a TRAM domain in the interval 378–441 (RRMLGTTQRI…PNSLRGKVVR (64 aa)).

Belongs to the methylthiotransferase family. MiaB subfamily. Monomer. It depends on [4Fe-4S] cluster as a cofactor.

The protein localises to the cytoplasm. It carries out the reaction N(6)-dimethylallyladenosine(37) in tRNA + (sulfur carrier)-SH + AH2 + 2 S-adenosyl-L-methionine = 2-methylsulfanyl-N(6)-dimethylallyladenosine(37) in tRNA + (sulfur carrier)-H + 5'-deoxyadenosine + L-methionine + A + S-adenosyl-L-homocysteine + 2 H(+). Functionally, catalyzes the methylthiolation of N6-(dimethylallyl)adenosine (i(6)A), leading to the formation of 2-methylthio-N6-(dimethylallyl)adenosine (ms(2)i(6)A) at position 37 in tRNAs that read codons beginning with uridine. The polypeptide is tRNA-2-methylthio-N(6)-dimethylallyladenosine synthase (Escherichia coli (strain SE11)).